A 172-amino-acid chain; its full sequence is Cell division protein SepF (172 aa).

The interval 16–78 is disordered; that stretch reads DGDEHYEPQP…RAASNRDDSS (63 aa). Over residues 17–48 the composition is skewed to basic and acidic residues; that stretch reads GDEHYEPQPEGKQTRPAQKNEEYVDQEIRHTE.

It belongs to the SepF family. Homodimer. Interacts with FtsZ.

It is found in the cytoplasm. Functionally, cell division protein that is part of the divisome complex and is recruited early to the Z-ring. Probably stimulates Z-ring formation, perhaps through the cross-linking of FtsZ protofilaments. Its function overlaps with FtsA. In Renibacterium salmoninarum (strain ATCC 33209 / DSM 20767 / JCM 11484 / NBRC 15589 / NCIMB 2235), this protein is Cell division protein SepF.